We begin with the raw amino-acid sequence, 769 residues long: Calcium up-regulated protein B (769 aa).

Residues 1 to 22 (MINIEDISKSSNQSEEKQLKST) form a disordered region. 2 Ricin B-type lectin domains span residues 25 to 145 (KPKY…WTTF) and 158 to 296 (FQSK…WITN).

It belongs to the cup family.

The protein localises to the cytoplasm. It is found in the membrane. Functionally, may play an important role in stabilizing and/or regulating the cell membrane during Ca(2+) stress or certain stages of development. This chain is Calcium up-regulated protein B (cupB), found in Dictyostelium discoideum (Social amoeba).